Reading from the N-terminus, the 540-residue chain is Exopolysaccharide phosphotransferase SCO6022 (540 aa).

It belongs to the stealth family.

The protein is Exopolysaccharide phosphotransferase SCO6022 of Streptomyces coelicolor (strain ATCC BAA-471 / A3(2) / M145).